The following is a 241-amino-acid chain: uncharacterized protein (241 aa).

7 helical membrane passes run 12-32 (ITEIYFQYVIYILCFGVLLLL), 39-59 (LLWLHLVSILVGLIANYEMKF), 89-109 (VYDVICHTIMVVICYHQICYT), 117-137 (YYTFHLFSVMIIIGALFNCVV), 152-172 (LFEYTTIFQALSTGYWVATML), 180-200 (IHFYSHWIIWIGLMTINWFVY), and 215-235 (YVEAVFIVCTWYSGIISSPLI).

It belongs to the mimivirus L68/R809 family.

The protein localises to the membrane. This is an uncharacterized protein from Acanthamoeba polyphaga mimivirus (APMV).